The primary structure comprises 274 residues: HTH-type transcriptional regulator GadX (274 aa).

One can recognise an HTH araC/xylS-type domain in the interval 145–242 (TRVCTVINNN…GMTPTEYQER (98 aa)). DNA-binding regions (H-T-H motif) lie at residues 162–183 (ARIA…REEE) and 209–232 (IKRV…RNYY).

In terms of assembly, homodimer.

Functionally, positively regulates the expression of about fifteen genes involved in acid resistance such as gadA, gadB and gadC. Depending on the conditions (growth phase and medium), can repress gadW. The sequence is that of HTH-type transcriptional regulator GadX (gadX) from Escherichia coli O157:H7.